The chain runs to 991 residues: UvrABC system protein A (991 aa).

48 to 55 (GLSGSGKS) serves as a coordination point for ATP. 2 consecutive ABC transporter domains span residues 345–624 (WAKS…PKSL) and 644–972 (NHRR…KFLE). 676–683 (GVSGGGKS) lines the ATP pocket. A C4-type zinc finger spans residues 775-801 (CEACQGDGVIKIEMHFLPDVYVTCDVC).

It belongs to the ABC transporter superfamily. UvrA family. As to quaternary structure, forms a heterotetramer with UvrB during the search for lesions.

The protein resides in the cytoplasm. Functionally, the UvrABC repair system catalyzes the recognition and processing of DNA lesions. UvrA is an ATPase and a DNA-binding protein. A damage recognition complex composed of 2 UvrA and 2 UvrB subunits scans DNA for abnormalities. When the presence of a lesion has been verified by UvrB, the UvrA molecules dissociate. In Bradyrhizobium diazoefficiens (strain JCM 10833 / BCRC 13528 / IAM 13628 / NBRC 14792 / USDA 110), this protein is UvrABC system protein A.